Consider the following 257-residue polypeptide: MDVIPAIDLLEGRCVRLYQGDYDQSQVFSENPVEVAKAWEAQGAQWLHLVDLDGAKTGQPVNLDTIAAVVEALEIPVQVGGGLRDRNRVTQLLNLGVRRGILGTVAIENPDLVQELCQEFPDQIVVGIDAREGRVATRGWLETSEILAVDLAKRMVTAGAAAIIYTDIQRDGTLQGPNIPMLREMAEAITIPVIASGGVSSITDLLNLLALEAIGVTGAIVGKALYTEDIALSEALRAVGPGRWQDVPPDLGSSALA.

D8 (proton acceptor) is an active-site residue. D129 (proton donor) is an active-site residue.

The protein belongs to the HisA/HisF family.

Its subcellular location is the cytoplasm. The enzyme catalyses 1-(5-phospho-beta-D-ribosyl)-5-[(5-phospho-beta-D-ribosylamino)methylideneamino]imidazole-4-carboxamide = 5-[(5-phospho-1-deoxy-D-ribulos-1-ylimino)methylamino]-1-(5-phospho-beta-D-ribosyl)imidazole-4-carboxamide. The protein operates within amino-acid biosynthesis; L-histidine biosynthesis; L-histidine from 5-phospho-alpha-D-ribose 1-diphosphate: step 4/9. This Acaryochloris marina (strain MBIC 11017) protein is 1-(5-phosphoribosyl)-5-[(5-phosphoribosylamino)methylideneamino] imidazole-4-carboxamide isomerase.